Here is a 111-residue protein sequence, read N- to C-terminus: 2Fe-2S ferredoxin (111 aa).

A 2Fe-2S ferredoxin-type domain is found at Met1 to Asn104. [2Fe-2S] cluster-binding residues include Cys42, Cys48, Cys51, and Cys87.

Belongs to the adrenodoxin/putidaredoxin family. The cofactor is [2Fe-2S] cluster.

In terms of biological role, ferredoxin are iron-sulfur proteins that transfer electrons in a wide variety of metabolic reactions. The polypeptide is 2Fe-2S ferredoxin (fdx) (Buchnera aphidicola subsp. Acyrthosiphon pisum (strain APS) (Acyrthosiphon pisum symbiotic bacterium)).